A 291-amino-acid chain; its full sequence is 4-diphosphocytidyl-2-C-methyl-D-erythritol kinase (291 aa).

Lys10 is an active-site residue. An ATP-binding site is contributed by 100–110; it reads PIGGGLGGGSS. Asp142 is an active-site residue.

This sequence belongs to the GHMP kinase family. IspE subfamily. As to quaternary structure, homodimer.

The enzyme catalyses 4-CDP-2-C-methyl-D-erythritol + ATP = 4-CDP-2-C-methyl-D-erythritol 2-phosphate + ADP + H(+). It participates in isoprenoid biosynthesis; isopentenyl diphosphate biosynthesis via DXP pathway; isopentenyl diphosphate from 1-deoxy-D-xylulose 5-phosphate: step 3/6. Its function is as follows. Catalyzes the phosphorylation of the position 2 hydroxy group of 4-diphosphocytidyl-2C-methyl-D-erythritol. The sequence is that of 4-diphosphocytidyl-2-C-methyl-D-erythritol kinase from Hamiltonella defensa subsp. Acyrthosiphon pisum (strain 5AT).